We begin with the raw amino-acid sequence, 157 residues long: Transcription elongation factor GreA (157 aa).

A coiled-coil region spans residues 47 to 75; the sequence is ENAEYDAAREKQGQIEDRITELENILSNA.

The protein belongs to the GreA/GreB family.

Necessary for efficient RNA polymerase transcription elongation past template-encoded arresting sites. The arresting sites in DNA have the property of trapping a certain fraction of elongating RNA polymerases that pass through, resulting in locked ternary complexes. Cleavage of the nascent transcript by cleavage factors such as GreA or GreB allows the resumption of elongation from the new 3'terminus. GreA releases sequences of 2 to 3 nucleotides. The polypeptide is Transcription elongation factor GreA (Mycoplasmopsis pulmonis (strain UAB CTIP) (Mycoplasma pulmonis)).